A 336-amino-acid chain; its full sequence is tRNA N6-adenosine threonylcarbamoyltransferase (336 aa).

His-111 and His-115 together coordinate Fe cation. Substrate-binding positions include 134 to 138, Asp-167, Gly-180, and Asn-270; that span reads LVSGG. Asp-298 contributes to the Fe cation binding site.

This sequence belongs to the KAE1 / TsaD family. Requires Fe(2+) as cofactor.

It localises to the cytoplasm. The enzyme catalyses L-threonylcarbamoyladenylate + adenosine(37) in tRNA = N(6)-L-threonylcarbamoyladenosine(37) in tRNA + AMP + H(+). Functionally, required for the formation of a threonylcarbamoyl group on adenosine at position 37 (t(6)A37) in tRNAs that read codons beginning with adenine. Is involved in the transfer of the threonylcarbamoyl moiety of threonylcarbamoyl-AMP (TC-AMP) to the N6 group of A37, together with TsaE and TsaB. TsaD likely plays a direct catalytic role in this reaction. This is tRNA N6-adenosine threonylcarbamoyltransferase from Acinetobacter baumannii (strain AB307-0294).